The chain runs to 440 residues: C-terminal-binding protein 1 (440 aa).

The tract at residues 1–70 (MGSSHLLNKG…EIHEKVLNEA (70 aa)) is interaction with GLIS2 1. NAD(+) contacts are provided by residues Ser-100, 180–185 (IGLGRV), Asp-204, 237–243 (CGLNEHN), 264–266 (TAR), and Asp-290. Residue Arg-266 is part of the active site. Residues 288–360 (ALDVHESEPF…VNKDHLTAAT (73 aa)) are interaction with GLIS2 2. Residue Glu-295 is part of the active site. Phosphoserine is present on Ser-300. Catalysis depends on His-315, which acts as the Proton donor. Residue 315-318 (HAAW) participates in NAD(+) binding. The interval 408–440 (SHGLPPVAHPPHAPSPGQTVKPEADRDHASDQL) is disordered. Residue Ser-422 is modified to Phosphoserine; by HIPK2. A Glycyl lysine isopeptide (Lys-Gly) (interchain with G-Cter in SUMO) cross-link involves residue Lys-428. Positions 429 to 440 (PEADRDHASDQL) are enriched in basic and acidic residues.

This sequence belongs to the D-isomer specific 2-hydroxyacid dehydrogenase family. As to quaternary structure, homo- or heterodimer. Heterodimer with CTBP2. Interacts with PRDM16; the interaction represses white adipose tissue (WAT)-specific genes expression. Interacts with GLIS2, FOXP2, HDAC4, HDAC5, HDAC9 and ZNF217. Interacts with ELK3 (via its PXDLS motif). Interacts with RBBP8 (via its PXDLS motif); the interaction is disrupted by binding to adenovirus E1A. Interacts with FOXP1, HIPK2, PNN, NRIP1, MECOM, ZFHX1B and WIZ. Interacts with ZNF366 (via PXDLS motif). Interaction with SATB1 (non-acetylated form); the interaction stabilizes its attachment to DNA and promotes transcription repression. Interacts with BCL6; the interaction is required for BCL6 transcriptional autoinhibition and inhibition of some BCL6 target genes. Interacts with IKZF4. Interacts with MCRIP1 (unphosphorylated form, via the PXDLS motif); competitively inhibiting CTBP-ZEB1 interaction. Interacts with Bassoon/BSN; this interaction targets and anchors CTBP1 to presynapses. Interacts with SIMC1. (Microbial infection) Interacts with Epstein-Barr virus EBNA3. Interacts with Epstein-Barr virus EBNA6; this interaction leads to gene repression, but also seems to interfere with the repressive function of CtBP pre-bound to DNA, leading to EBNA6 mediated up-regulation of many cellular genes. In terms of assembly, (Microbial infection) Interacts with adenovirus E1A protein (via its C-terminus); the interaction disrupts the interaction of CTBP1 with RBBP8. As to quaternary structure, (Microbial infection) Interacts with human adenovirus 5 E1A protein; this interaction seems to potentiate viral replication. NAD(+) serves as cofactor. In terms of processing, the level of phosphorylation appears to be regulated during the cell cycle. Phosphorylation by HIPK2 on Ser-422 induces proteasomal degradation. Post-translationally, ADP-ribosylated; when cells are exposed to brefeldin A. Sumoylation on Lys-428 is promoted by the E3 SUMO-protein ligase CBX4. As to expression, expressed in germinal center B-cells.

It is found in the cytoplasm. The protein resides in the nucleus. Functionally, corepressor targeting diverse transcription regulators such as GLIS2 or BCL6. Has dehydrogenase activity. Involved in controlling the equilibrium between tubular and stacked structures in the Golgi complex. Functions in brown adipose tissue (BAT) differentiation. The protein is C-terminal-binding protein 1 (CTBP1) of Homo sapiens (Human).